Consider the following 151-residue polypeptide: Small ribosomal subunit protein uS15 (151 aa).

Ser32 is subject to Phosphoserine. Glycyl lysine isopeptide (Lys-Gly) (interchain with G-Cter in ubiquitin) cross-links involve residues Lys39 and Lys43.

The protein belongs to the universal ribosomal protein uS15 family. In terms of assembly, component of the small ribosomal subunit (SSU). Mature yeast ribosomes consist of a small (40S) and a large (60S) subunit. The 40S small subunit contains 1 molecule of ribosomal RNA (18S rRNA) and 33 different proteins (encoded by 57 genes). The large 60S subunit contains 3 rRNA molecules (25S, 5.8S and 5S rRNA) and 46 different proteins (encoded by 81 genes).

The protein localises to the cytoplasm. Its function is as follows. Component of the ribosome, a large ribonucleoprotein complex responsible for the synthesis of proteins in the cell. The small ribosomal subunit (SSU) binds messenger RNAs (mRNAs) and translates the encoded message by selecting cognate aminoacyl-transfer RNA (tRNA) molecules. The large subunit (LSU) contains the ribosomal catalytic site termed the peptidyl transferase center (PTC), which catalyzes the formation of peptide bonds, thereby polymerizing the amino acids delivered by tRNAs into a polypeptide chain. The nascent polypeptides leave the ribosome through a tunnel in the LSU and interact with protein factors that function in enzymatic processing, targeting, and the membrane insertion of nascent chains at the exit of the ribosomal tunnel. The polypeptide is Small ribosomal subunit protein uS15 (Saccharomyces cerevisiae (strain ATCC 204508 / S288c) (Baker's yeast)).